The following is a 375-amino-acid chain: Carbamoyl phosphate synthase small chain (375 aa).

The CPSase stretch occupies residues 1-184 (MVSLYLENGL…LDYKPFDEKT (184 aa)). 3 residues coordinate L-glutamine: Ser-44, Gly-240, and Gly-242. The Glutamine amidotransferase type-1 domain occupies 188–375 (IIAVLDFGAK…KEFVELLKDF (188 aa)). Catalysis depends on Cys-268, which acts as the Nucleophile. L-glutamine is bound by residues Leu-269, Gln-272, Asn-310, and Tyr-313. Catalysis depends on residues His-351 and Glu-353.

The protein belongs to the CarA family. In terms of assembly, composed of two chains; the small (or glutamine) chain promotes the hydrolysis of glutamine to ammonia, which is used by the large (or ammonia) chain to synthesize carbamoyl phosphate. Tetramer of heterodimers (alpha,beta)4.

The enzyme catalyses hydrogencarbonate + L-glutamine + 2 ATP + H2O = carbamoyl phosphate + L-glutamate + 2 ADP + phosphate + 2 H(+). The catalysed reaction is L-glutamine + H2O = L-glutamate + NH4(+). Its pathway is amino-acid biosynthesis; L-arginine biosynthesis; carbamoyl phosphate from bicarbonate: step 1/1. The protein operates within pyrimidine metabolism; UMP biosynthesis via de novo pathway; (S)-dihydroorotate from bicarbonate: step 1/3. Functionally, small subunit of the glutamine-dependent carbamoyl phosphate synthetase (CPSase). CPSase catalyzes the formation of carbamoyl phosphate from the ammonia moiety of glutamine, carbonate, and phosphate donated by ATP, constituting the first step of 2 biosynthetic pathways, one leading to arginine and/or urea and the other to pyrimidine nucleotides. The small subunit (glutamine amidotransferase) binds and cleaves glutamine to supply the large subunit with the substrate ammonia. The sequence is that of Carbamoyl phosphate synthase small chain from Helicobacter pylori (strain ATCC 700392 / 26695) (Campylobacter pylori).